The sequence spans 878 residues: NUT family member 2E (878 aa).

5 disordered regions span residues 273–324 (WSQG…DDSC), 417–511 (QKSQ…VPEE), 527–560 (LLGP…PPDP), 622–757 (RLPP…EEEE), and 775–878 (WLPQ…HCSQ). 2 stretches are compositionally biased toward pro residues: residues 278–288 (PLPPPPPPAAQ) and 427–444 (CLPP…PPAP). Basic and acidic residues-rich tracts occupy residues 537-551 (EPEK…KQPQ) and 622-631 (RLPPLKEKQH).

Belongs to the NUT family.

This is NUT family member 2E (NUTM2E) from Homo sapiens (Human).